The primary structure comprises 107 residues: Translation initiation factor IF-1, chloroplastic (107 aa).

In terms of domain architecture, S1-like spans 8–83 (REKKNPREAK…SKGRIIYRLP (76 aa)). A disordered region spans residues 81–107 (RLPHKDSKRTEDSKDTEDLKDTKDSKD). Residues 83–107 (PHKDSKRTEDSKDTEDLKDTKDSKD) show a composition bias toward basic and acidic residues.

This sequence belongs to the IF-1 family. Component of the 30S ribosomal translation pre-initiation complex which assembles on the 30S ribosome in the order IF-2 and IF-3, IF-1 and N-formylmethionyl-tRNA(fMet); mRNA recruitment can occur at any time during PIC assembly.

It localises to the plastid. Its subcellular location is the chloroplast. One of the essential components for the initiation of protein synthesis. Stabilizes the binding of IF-2 and IF-3 on the 30S subunit to which N-formylmethionyl-tRNA(fMet) subsequently binds. Helps modulate mRNA selection, yielding the 30S pre-initiation complex (PIC). Upon addition of the 50S ribosomal subunit IF-1, IF-2 and IF-3 are released leaving the mature 70S translation initiation complex. This is Translation initiation factor IF-1, chloroplastic from Saccharum hybrid (Sugarcane).